A 183-amino-acid polypeptide reads, in one-letter code: Large ribosomal subunit protein uL22 (183 aa).

The protein belongs to the universal ribosomal protein uL22 family.

The chain is Large ribosomal subunit protein uL22 (RPL17) from Podocoryna carnea (Hydrozoan).